The following is a 534-amino-acid chain: Bifunctional purine biosynthesis protein PurH (534 aa).

An MGS-like domain is found at 1–148 (MNTVRPIRRA…KNHQDVTIVV (148 aa)).

It belongs to the PurH family.

The catalysed reaction is (6R)-10-formyltetrahydrofolate + 5-amino-1-(5-phospho-beta-D-ribosyl)imidazole-4-carboxamide = 5-formamido-1-(5-phospho-D-ribosyl)imidazole-4-carboxamide + (6S)-5,6,7,8-tetrahydrofolate. It carries out the reaction IMP + H2O = 5-formamido-1-(5-phospho-D-ribosyl)imidazole-4-carboxamide. Its pathway is purine metabolism; IMP biosynthesis via de novo pathway; 5-formamido-1-(5-phospho-D-ribosyl)imidazole-4-carboxamide from 5-amino-1-(5-phospho-D-ribosyl)imidazole-4-carboxamide (10-formyl THF route): step 1/1. The protein operates within purine metabolism; IMP biosynthesis via de novo pathway; IMP from 5-formamido-1-(5-phospho-D-ribosyl)imidazole-4-carboxamide: step 1/1. The polypeptide is Bifunctional purine biosynthesis protein PurH (Shewanella denitrificans (strain OS217 / ATCC BAA-1090 / DSM 15013)).